The chain runs to 98 residues: Small ribosomal subunit protein bS20 (98 aa).

The protein belongs to the bacterial ribosomal protein bS20 family.

Binds directly to 16S ribosomal RNA. The sequence is that of Small ribosomal subunit protein bS20 from Synechococcus sp. (strain CC9902).